We begin with the raw amino-acid sequence, 82 residues long: Small ribosomal subunit protein bS16 (82 aa).

This sequence belongs to the bacterial ribosomal protein bS16 family.

The sequence is that of Small ribosomal subunit protein bS16 from Blochmanniella floridana.